The primary structure comprises 378 residues: RIB43A-like with coiled-coils protein 1 (378 aa).

Coiled-coil stretches lie at residues 153-250 (RMQQ…VTSD) and 279-334 (EQRA…CAEF).

The protein belongs to the RIB43A family. In terms of assembly, microtubule inner protein component of sperm flagellar doublet microtubules.

It localises to the cytoplasm. The protein localises to the cytoskeleton. Its subcellular location is the flagellum axoneme. This Rattus norvegicus (Rat) protein is RIB43A-like with coiled-coils protein 1 (Ribc1).